The chain runs to 134 residues: Ribonuclease VapC11 (134 aa).

A PINc domain is found at 2 to 126; it reads ILIDTSAWVE…ADFDVIARIT (125 aa). Asp5 and Asp98 together coordinate Mg(2+).

Belongs to the PINc/VapC protein family. The cofactor is Mg(2+).

Toxic component of a type II toxin-antitoxin (TA) system. Acts as an RNase. Its toxic effects on cell growth and colony formation are neutralized by coexpression with cognate antitoxin VapB11. The protein is Ribonuclease VapC11 of Mycobacterium tuberculosis (strain CDC 1551 / Oshkosh).